Consider the following 908-residue polypeptide: Alanine--tRNA ligase (908 aa).

Zn(2+) contacts are provided by histidine 588, histidine 592, cysteine 691, and histidine 695.

Belongs to the class-II aminoacyl-tRNA synthetase family. Zn(2+) is required as a cofactor.

The protein localises to the cytoplasm. It catalyses the reaction tRNA(Ala) + L-alanine + ATP = L-alanyl-tRNA(Ala) + AMP + diphosphate. In terms of biological role, catalyzes the attachment of alanine to tRNA(Ala) in a two-step reaction: alanine is first activated by ATP to form Ala-AMP and then transferred to the acceptor end of tRNA(Ala). Also edits incorrectly charged Ser-tRNA(Ala) and Gly-tRNA(Ala) via its editing domain. The protein is Alanine--tRNA ligase of Mycobacterium leprae (strain TN).